We begin with the raw amino-acid sequence, 527 residues long: Lysine--tRNA ligase (527 aa).

Mg(2+)-binding residues include E431 and E438.

This sequence belongs to the class-II aminoacyl-tRNA synthetase family. Homodimer. Mg(2+) is required as a cofactor.

It localises to the cytoplasm. The catalysed reaction is tRNA(Lys) + L-lysine + ATP = L-lysyl-tRNA(Lys) + AMP + diphosphate. This chain is Lysine--tRNA ligase (lysS), found in Chlamydia pneumoniae (Chlamydophila pneumoniae).